A 272-amino-acid polypeptide reads, in one-letter code: Phosphate import ATP-binding protein PstB (272 aa).

The ABC transporter domain maps to 18–257 (VSMQNVTISY…FNDTQSIFNS (240 aa)). 50-57 (GPSGCGKS) is a binding site for ATP.

The protein belongs to the ABC transporter superfamily. Phosphate importer (TC 3.A.1.7) family. As to quaternary structure, the complex is composed of two ATP-binding proteins (PstB), two transmembrane proteins (PstC and PstA) and a solute-binding protein (PstS).

It localises to the cell inner membrane. The enzyme catalyses phosphate(out) + ATP + H2O = ADP + 2 phosphate(in) + H(+). Functionally, part of the ABC transporter complex PstSACB involved in phosphate import. Responsible for energy coupling to the transport system. The sequence is that of Phosphate import ATP-binding protein PstB from Synechococcus sp. (strain CC9902).